The chain runs to 122 residues: Nitrogen fixation nifHD region GlnB-like protein 2 (122 aa).

Belongs to the P(II) protein family.

Could be involved in the regulation of nitrogen fixation. The polypeptide is Nitrogen fixation nifHD region GlnB-like protein 2 (glnBB) (Methanobacterium ivanovii).